Here is a 384-residue protein sequence, read N- to C-terminus: ATP phosphoribosyltransferase regulatory subunit (384 aa).

The protein belongs to the class-II aminoacyl-tRNA synthetase family. HisZ subfamily. In terms of assembly, heteromultimer composed of HisG and HisZ subunits.

The protein localises to the cytoplasm. The protein operates within amino-acid biosynthesis; L-histidine biosynthesis; L-histidine from 5-phospho-alpha-D-ribose 1-diphosphate: step 1/9. In terms of biological role, required for the first step of histidine biosynthesis. May allow the feedback regulation of ATP phosphoribosyltransferase activity by histidine. The polypeptide is ATP phosphoribosyltransferase regulatory subunit (Paracidovorax citrulli (strain AAC00-1) (Acidovorax citrulli)).